The following is a 994-amino-acid chain: Regulator of telomere elongation helicase 1 homolog (994 aa).

The region spanning 15-324 (SKTSIKFPFE…KLIENLRTED (310 aa)) is the Helicase ATP-binding domain. Position 50–57 (50–57 (SPTGTGKT)) interacts with ATP. [4Fe-4S] cluster-binding residues include Cys-142, Cys-160, Cys-169, and Cys-208. Positions 251–254 (DEAH) match the DEAH box motif. Over residues 818–831 (KIEKKEKIEPRPIK) the composition is skewed to basic and acidic residues. A disordered region spans residues 818–896 (KIEKKEKIEP…HVVSGSEPPK (79 aa)). Residues 833–844 (DSSSSSVFSLPT) are compositionally biased toward polar residues. Residues 847 to 856 (DELKVKKWEQ) are compositionally biased toward basic and acidic residues. Composition is skewed to polar residues over residues 859–869 (DSQTNVSSSSD) and 880–889 (PGNSSGQHVV).

The protein belongs to the helicase family. RAD3/XPD subfamily.

Its subcellular location is the nucleus. The enzyme catalyses ATP + H2O = ADP + phosphate + H(+). In terms of biological role, a probable ATP-dependent DNA helicase implicated in DNA repair and the maintenance of genomic stability. Acts as an anti-recombinase to counteract toxic recombination and limit crossover during meiosis. Regulates meiotic recombination and crossover homeostasis by physically dissociating strand invasion events and thereby promotes noncrossover repair by meiotic synthesis dependent strand annealing (SDSA) as well as disassembly of D loop recombination intermediates. The chain is Regulator of telomere elongation helicase 1 homolog from Caenorhabditis briggsae.